The primary structure comprises 41 residues: Photosystem II reaction center protein J (41 aa).

Residues isoleucine 9–phenylalanine 29 traverse the membrane as a helical segment.

This sequence belongs to the PsbJ family. PSII is composed of 1 copy each of membrane proteins PsbA, PsbB, PsbC, PsbD, PsbE, PsbF, PsbH, PsbI, PsbJ, PsbK, PsbL, PsbM, PsbT, PsbX, PsbY, PsbZ, Psb30/Ycf12, at least 3 peripheral proteins of the oxygen-evolving complex and a large number of cofactors. It forms dimeric complexes.

It localises to the plastid. The protein localises to the chloroplast thylakoid membrane. Its function is as follows. One of the components of the core complex of photosystem II (PSII). PSII is a light-driven water:plastoquinone oxidoreductase that uses light energy to abstract electrons from H(2)O, generating O(2) and a proton gradient subsequently used for ATP formation. It consists of a core antenna complex that captures photons, and an electron transfer chain that converts photonic excitation into a charge separation. The chain is Photosystem II reaction center protein J from Ostreococcus tauri.